We begin with the raw amino-acid sequence, 155 residues long: Large ribosomal subunit protein uL13 (155 aa).

This sequence belongs to the universal ribosomal protein uL13 family. As to quaternary structure, part of the 50S ribosomal subunit.

Its function is as follows. This protein is one of the early assembly proteins of the 50S ribosomal subunit, although it is not seen to bind rRNA by itself. It is important during the early stages of 50S assembly. The protein is Large ribosomal subunit protein uL13 of Rickettsia bellii (strain OSU 85-389).